The following is a 229-amino-acid chain: MPPHFIDGEPHDHQHDRPRRVRVAGEPVRIGIGGPVGSGKTALVAALCRQLREELSLAVLTNDIYTTEDADFLRRHAVLPDERIAAVQTGGCPHTAIRDDITANLDAIDDLIAANPPLDLILVESGGDNLTATFSSGLIDVQIFVVDVAGGDKVPRKGGPGVTFSDLLVINKTDLAPMVGADLGVMRRDAERVREGRPTALISLTEDPSSGPALEWVREQVRTLADVHQ.

A compositionally biased stretch (basic and acidic residues) spans 1–15; that stretch reads MPPHFIDGEPHDHQH. Residues 1-20 form a disordered region; sequence MPPHFIDGEPHDHQHDRPRR. 34–41 is a GTP binding site; it reads GPVGSGKT.

This sequence belongs to the SIMIBI class G3E GTPase family. UreG subfamily. In terms of assembly, homodimer. UreD, UreF and UreG form a complex that acts as a GTP-hydrolysis-dependent molecular chaperone, activating the urease apoprotein by helping to assemble the nickel containing metallocenter of UreC. The UreE protein probably delivers the nickel.

The protein resides in the cytoplasm. In terms of biological role, facilitates the functional incorporation of the urease nickel metallocenter. This process requires GTP hydrolysis, probably effectuated by UreG. The polypeptide is Urease accessory protein UreG (Rhodococcus jostii (strain RHA1)).